A 190-amino-acid chain; its full sequence is Adenylate kinase (190 aa).

11 to 16 provides a ligand contact to ATP; that stretch reads GAGKGT. Residues 31–60 are NMP; it reads STGDIFRFNLKNDTELGKQARVFMDNGELV. Residues Thr32, Arg37, 58–60, 86–89, and Gln93 each bind AMP; these read ELV and GYPR. The LID stretch occupies residues 127–137; it reads ERGKTSGRADD. Arg128 provides a ligand contact to ATP. Arg134 and Arg146 together coordinate AMP. Gly174 is a binding site for ATP.

It belongs to the adenylate kinase family. In terms of assembly, monomer.

It localises to the cytoplasm. The enzyme catalyses AMP + ATP = 2 ADP. The protein operates within purine metabolism; AMP biosynthesis via salvage pathway; AMP from ADP: step 1/1. In terms of biological role, catalyzes the reversible transfer of the terminal phosphate group between ATP and AMP. Plays an important role in cellular energy homeostasis and in adenine nucleotide metabolism. The sequence is that of Adenylate kinase from Flavobacterium johnsoniae (strain ATCC 17061 / DSM 2064 / JCM 8514 / BCRC 14874 / CCUG 350202 / NBRC 14942 / NCIMB 11054 / UW101) (Cytophaga johnsonae).